We begin with the raw amino-acid sequence, 197 residues long: GTP cyclohydrolase-2 (197 aa).

Position 50–54 (50–54) interacts with GTP; it reads RIHSE. Residues cysteine 55, cysteine 66, and cysteine 68 each coordinate Zn(2+). Residues glutamine 71, 93–95, and threonine 115 each bind GTP; that span reads EGR. Residue aspartate 127 is the Proton acceptor of the active site. Arginine 129 (nucleophile) is an active-site residue. Residues threonine 150 and lysine 155 each contribute to the GTP site.

The protein belongs to the GTP cyclohydrolase II family. Zn(2+) is required as a cofactor.

The catalysed reaction is GTP + 4 H2O = 2,5-diamino-6-hydroxy-4-(5-phosphoribosylamino)-pyrimidine + formate + 2 phosphate + 3 H(+). It participates in cofactor biosynthesis; riboflavin biosynthesis; 5-amino-6-(D-ribitylamino)uracil from GTP: step 1/4. Catalyzes the conversion of GTP to 2,5-diamino-6-ribosylamino-4(3H)-pyrimidinone 5'-phosphate (DARP), formate and pyrophosphate. In Tolumonas auensis (strain DSM 9187 / NBRC 110442 / TA 4), this protein is GTP cyclohydrolase-2.